The primary structure comprises 1271 residues: MGTKWTEEQELAINTRKCNLLVAAAAGSGKTAVLVERIIKMITEGENPVDIDKLLVVTFTNAAASEMRERIGDAISKALEKDPSSEALQRQLALLNRASITTMHSFCLEVIKNNFHLIDLDPGFRIGDQTECELIKQDILADLFEDMYAKDDECFKDLVEAYGGSKSDDNLNSIILKFYNFIMSGPWPETWLKDKVEEFNINSIEELEGKKWIEVLKESIILDLNNAYSMLTQARDIAEMGGGLEPYLVNIYPEIIQVEELRIALSEGIVKFYNKLMGASFGRLKSVRKASVDDERALEKAKSLRDESKKIIENLRDNVFETSLEEAVLGMKKMYPLMKCLSGLVIEFSNRYRDKKREKDILDFNDLEHLCLEILIDKDEEGNIKPSQVALEFKDKFEEVLVDEYQDSNTIQETIVGMVSRRDVENPNVFMVGDVKQSIYKFRQANPELFLEKYINYREFEDSNRKIMLYKNFRSREEIINGVNYIFKTLMSNTVGELEYDEKEALNLGASYGELNEENVEKEYIDEIENLKVAGDIELNILNKAGNKEYRDDDELGEEEEDLDSIQLEARIIGKKIKELMNPEDGSHYMVFDKDLGKYRRIKYKDIVILLRATKNWAETFVDELGTYGIPVYADTGTGYFQTIEIRTILALLHIIDNPMQDIYILSALRSPIFSFTSEEFADLRLLNKDKYFFEIIKEVVDGIYDESISKELKGKCKYFLDYLNKWREKAAYMPIDEFIWFLYSDTSYYGYVGTMPNGVQRQANLRILFQRAKQYESTSFKGLFNFINFINKLKKSSGDMGSAKILGENENVVRIMSIHKSKGLEFPVVILGGTGKQFNKMDLREDILLHETLGIGTNCIDVKKRIKYDTLQKHAIKKKCELEVLSEEMRILYVAFTRAKEKLIITGAVSDLEKSCENWCKASASSGDNRINPGNVLKGKSYLDWICMALTKHKDGDAIRNIGNGDITLNLDDKSNWSFKSWDRSELLETNNNKKEKNNIDIFESNNWIESKKDIKEVIEIRDRLGFKYKYIESCNTPSNISVTELKRAHQEEEFMQESYNIIDNESNEENKKEKIKRKPRFMEERQEEFSAAKKGTITHFVMQHIDLDKVTYIDEIREEVLKMVKKELLTEEEGKVVNVFKIQKFFKSDLGQRMLNSYKSGKKVYRELPFITEIPSSIIEKNLDPKIYGEEKVRLQGIIDAFFEEEDGYVLLDYKTDYVKEGEEEDFINKYKIQINLYKDTLNKILGEEVKEAYLYSFYLEKELKISKE.

The UvrD-like helicase ATP-binding domain maps to 3–476 (TKWTEEQELA…IMLYKNFRSR (474 aa)). 24-31 (AAAGSGKT) contacts ATP. Positions 528 to 824 (IENLKVAGDI…RIMSIHKSKG (297 aa)) constitute a UvrD-like helicase C-terminal domain.

This sequence belongs to the helicase family. AddA subfamily. In terms of assembly, heterodimer of AddA and AddB/RexB. Requires Mg(2+) as cofactor.

It carries out the reaction Couples ATP hydrolysis with the unwinding of duplex DNA by translocating in the 3'-5' direction.. The catalysed reaction is ATP + H2O = ADP + phosphate + H(+). Its function is as follows. The heterodimer acts as both an ATP-dependent DNA helicase and an ATP-dependent, dual-direction single-stranded exonuclease. Recognizes the chi site generating a DNA molecule suitable for the initiation of homologous recombination. The AddA nuclease domain is required for chi fragment generation; this subunit has the helicase and 3' -&gt; 5' nuclease activities. This chain is ATP-dependent helicase/nuclease subunit A, found in Clostridium perfringens (strain ATCC 13124 / DSM 756 / JCM 1290 / NCIMB 6125 / NCTC 8237 / Type A).